Here is a 122-residue protein sequence, read N- to C-terminus: Large ribosomal subunit protein uL18 (122 aa).

It belongs to the universal ribosomal protein uL18 family. Part of the 50S ribosomal subunit; part of the 5S rRNA/L5/L18/L25 subcomplex. Contacts the 5S and 23S rRNAs.

In terms of biological role, this is one of the proteins that bind and probably mediate the attachment of the 5S RNA into the large ribosomal subunit, where it forms part of the central protuberance. This Hydrogenobaculum sp. (strain Y04AAS1) protein is Large ribosomal subunit protein uL18.